The primary structure comprises 345 residues: Fibronectin type 3 and ankyrin repeat domains protein 1 (345 aa).

Residues 8–108 (PPSKPHPPVV…LVSVSTTREP (101 aa)) form the Fibronectin type-III domain. ANK repeat units lie at residues 109 to 139 (ISSE…KVDV), 143 to 172 (FGFT…DVNL), 176 to 205 (SGKD…SWQA), 209 to 238 (GGCT…EVDV), 243 to 273 (SGWT…NVNV), and 277 to 306 (NGKT…DASV).

As to quaternary structure, interacts with COPS5; regulates the phosphorylation of JUN and the transcriptional activity of AP-1. Interacts with RYBP; may prevent the ubiquitin-mediated proteasomal degradation of FANK1. Post-translationally, polyubiquitinated. Polyubiquitination leads to proteasomal degradation. Mostly restricted to testis.

The protein resides in the nucleus. It is found in the cytoplasm. It localises to the cytosol. Its subcellular location is the cytoskeleton. The protein localises to the cilium basal body. The protein resides in the cell projection. It is found in the cilium. Functionally, through the activation of JUN and AP-1-mediated transcription, may regulate apoptosis. This chain is Fibronectin type 3 and ankyrin repeat domains protein 1, found in Homo sapiens (Human).